Consider the following 362-residue polypeptide: 3-isopropylmalate dehydrogenase (362 aa).

77–88 (GPKWGTGAVRPE) serves as a coordination point for NAD(+). Arg-95, Arg-105, Arg-134, and Asp-223 together coordinate substrate. 3 residues coordinate Mg(2+): Asp-223, Asp-248, and Asp-252. 287 to 298 (GSAPDLPANKVN) serves as a coordination point for NAD(+).

Belongs to the isocitrate and isopropylmalate dehydrogenases family. Homodimer. Mg(2+) serves as cofactor. The cofactor is Mn(2+).

The protein localises to the cytoplasm. The catalysed reaction is (2R,3S)-3-isopropylmalate + NAD(+) = 4-methyl-2-oxopentanoate + CO2 + NADH. It participates in amino-acid biosynthesis; L-leucine biosynthesis; L-leucine from 3-methyl-2-oxobutanoate: step 3/4. In terms of biological role, catalyzes the oxidation of 3-carboxy-2-hydroxy-4-methylpentanoate (3-isopropylmalate) to 3-carboxy-4-methyl-2-oxopentanoate. The product decarboxylates to 4-methyl-2 oxopentanoate. The polypeptide is 3-isopropylmalate dehydrogenase (LEU2) (Kluyveromyces lactis (strain ATCC 8585 / CBS 2359 / DSM 70799 / NBRC 1267 / NRRL Y-1140 / WM37) (Yeast)).